Here is a 65-residue protein sequence, read N- to C-terminus: Large ribosomal subunit protein bL35 (65 aa).

Belongs to the bacterial ribosomal protein bL35 family.

This is Large ribosomal subunit protein bL35 from Phytoplasma australiense.